The following is a 241-amino-acid chain: Uracil-DNA glycosylase (241 aa).

The active-site Proton acceptor is the Asp-71.

The protein belongs to the uracil-DNA glycosylase (UDG) superfamily. UNG family.

The protein resides in the cytoplasm. The enzyme catalyses Hydrolyzes single-stranded DNA or mismatched double-stranded DNA and polynucleotides, releasing free uracil.. Excises uracil residues from the DNA which can arise as a result of misincorporation of dUMP residues by DNA polymerase or due to deamination of cytosine. This chain is Uracil-DNA glycosylase, found in Xanthomonas campestris pv. campestris (strain 8004).